The sequence spans 161 residues: MLTHLDSQGRANMVDVTDKAVTSREAVAEAFVRMLPTTLQMIVSGGHPKGDVFAVARIAGIQAAKKTSDLIPLCHPLMLTSIKVHLAAEGDDAVRITASCKLAGQTGVEMEALTAASVAALTIYDMCKAVDRGMVIESVRLLEKLGGKSGHFIADQAQVSS.

Residues 73–75 and 110–111 each bind substrate; these read LCH and ME. Asp-125 is a catalytic residue.

This sequence belongs to the MoaC family. In terms of assembly, homohexamer; trimer of dimers.

It catalyses the reaction (8S)-3',8-cyclo-7,8-dihydroguanosine 5'-triphosphate = cyclic pyranopterin phosphate + diphosphate. Its pathway is cofactor biosynthesis; molybdopterin biosynthesis. Its function is as follows. Catalyzes the conversion of (8S)-3',8-cyclo-7,8-dihydroguanosine 5'-triphosphate to cyclic pyranopterin monophosphate (cPMP). The protein is Cyclic pyranopterin monophosphate synthase of Pseudomonas syringae pv. syringae (strain B728a).